The sequence spans 272 residues: MFPSKVKSAQSLSFSFTKFDPNQEDLIFQGHATSTNNVLQVTKLDSAGNPVSSSAGRVLYSAPLRLWEDSAVLTSFDTIINFEISTPYTSRIADGLAFFIAPPDSVISYHGGFLGLFPNANTLNNSSTSENQTTTKAASSNVVAVEFDTYLNPDYGDPNYIHIGIDVNSIRSKVTAKWDWQNGKIATAHISYNSVSKRLSVTSYYAGSKPATLSYDIELHTVLPEWVRVGLSASTGQDKERNTVHSWSFTSSLWTNVAKKENENKYITRGVL.

The N-terminal stretch at 1 to 8 (MFPSKVKS) is a signal peptide. 2 residues coordinate alpha-D-mannopyranose: Asp94 and Gly112. N-linked (GlcNAc...) asparagine glycans are attached at residues Asn125 and Asn131. Alpha-D-mannopyranose-binding positions include Asn152 and 237–238 (QD).

The protein belongs to the leguminous lectin family. Dimer (alpha/beta)2. Tetramer (alpha/beta)4. In terms of processing, glycosylated at Asn-125 by either a paucimannose type N-glycan (alpha-4) or a single N-acetylglucosamine (alpha-3). Glycosylated at Asn-131 by a paucimannose type N-glycan (alpha-2, alpha-3 and alpha-4). In alpha-2, Asn-125 is deamidated to an Asp, possibly due to the action of intrinsic peptide N-glycosidase (PGNase).

Its subcellular location is the protein storage vacuole lumen. In terms of biological role, mannose-binding lectin. Accommodates most effectively a non-reducing terminal alpha-d-mannosyl unit. Strongly precipitates murine IgM but not IgG. This Lablab purpureus (Hyacinth bean) protein is Flt3 receptor-interacting lectin.